The chain runs to 197 residues: Imidazoleglycerol-phosphate dehydratase (197 aa).

The protein belongs to the imidazoleglycerol-phosphate dehydratase family.

The protein localises to the cytoplasm. It catalyses the reaction D-erythro-1-(imidazol-4-yl)glycerol 3-phosphate = 3-(imidazol-4-yl)-2-oxopropyl phosphate + H2O. Its pathway is amino-acid biosynthesis; L-histidine biosynthesis; L-histidine from 5-phospho-alpha-D-ribose 1-diphosphate: step 6/9. This Cellvibrio japonicus (strain Ueda107) (Pseudomonas fluorescens subsp. cellulosa) protein is Imidazoleglycerol-phosphate dehydratase.